The chain runs to 210 residues: Cell division protein FtsQ (210 aa).

A POTRA domain is found at 1-58 (LQTSEIEVFQLLGLDGSTSLIALDIDAARRKLVQLPWVEDVDIRKVYPKTVEVRLKER). Residues 8–25 (VFQLLGLDGSTSLIALDI) traverse the membrane as a helical segment.

Belongs to the FtsQ/DivIB family. FtsQ subfamily.

It localises to the cell inner membrane. Functionally, essential cell division protein. The chain is Cell division protein FtsQ from Rhizobium radiobacter (Agrobacterium tumefaciens).